The primary structure comprises 464 residues: E3 ubiquitin-protein ligase ITT1 (464 aa).

The tract at residues 176–455 (SNYHCCICME…EAYSGCYGRL (280 aa)) is TRIAD supradomain. Zn(2+) is bound by residues Cys180, Cys183, Cys207, Cys210, Cys290, Cys300, Cys316, Cys319, Cys402, and Cys405. The RING-type 1 zinc-finger motif lies at 180–236 (CCICMEMEKGVRMIKLPCENANVEHYLCRGCAKSYFTAMIQENRISSVRCPQCEYKE). An IBR-type zinc finger spans residues 267-338 (DTELCERYEK…HAWHGYNNKC (72 aa)). The RING-type 2; atypical zinc-finger motif lies at 402 to 431 (CPKCKVVVERSEGCNKMKCEVCGTLFCFIC). Cys415 is a catalytic residue. Zn(2+) contacts are provided by Cys420, Cys423, Cys428, Cys431, His443, and Cys451.

This sequence belongs to the RBR family. RNF14 subfamily. Interacts with translation release factors eRF1 (SUP45) and eRF3 (SUP35) in vitro.

It catalyses the reaction [E2 ubiquitin-conjugating enzyme]-S-ubiquitinyl-L-cysteine + [acceptor protein]-L-lysine = [E2 ubiquitin-conjugating enzyme]-L-cysteine + [acceptor protein]-N(6)-ubiquitinyl-L-lysine.. It functions in the pathway protein modification; protein ubiquitination. Functionally, E3 ubiquitin-protein ligase involved in translation quality control. Involved in the rescue of stalled ribosomes by promoting ubiquitination and degradation of proteins on stalled ribosomes. Specifically required to resolve RNA-protein cross-links caused by reactive aldehydes, which trigger translation stress by stalling ribosomes: acts by catalying 'Lys-6'-linked ubiquitination of RNA-protein cross-links, leading to their degradation. Interacts with the translation termination factors eRF1 (SUP45) and eRF3 (SUP35); overexpression decreases the efficiency of translation termination. The protein is E3 ubiquitin-protein ligase ITT1 of Saccharomyces cerevisiae (strain ATCC 204508 / S288c) (Baker's yeast).